Here is a 277-residue protein sequence, read N- to C-terminus: Carbonyl reductase [NADPH] 1 (277 aa).

NADP(+) is bound by residues V10–V34, D63–I64, and N90. Phosphoserine is present on S30. Glutathione-binding positions include F95–V97 and Q106. A substrate-binding site is contributed by S140. A193–Y194 serves as a coordination point for glutathione. Catalysis depends on Y194, which acts as the Proton acceptor. Residues Y194 to K198 and V231 to T233 contribute to the NADP(+) site.

It belongs to the short-chain dehydrogenases/reductases (SDR) family. In terms of assembly, monomer.

The protein resides in the cytoplasm. It catalyses the reaction a secondary alcohol + NADP(+) = a ketone + NADPH + H(+). It carries out the reaction prostaglandin F2alpha + NADP(+) = prostaglandin E2 + NADPH + H(+). The enzyme catalyses prostaglandin E1 + NADP(+) = 15-oxoprostaglandin E1 + NADPH + H(+). The catalysed reaction is prostaglandin D2 + NADP(+) = 15-oxoprostaglandin D2 + NADPH + H(+). It catalyses the reaction menadione + NADPH + H(+) = menadiol + NADP(+). It carries out the reaction prostaglandin E2 + NADP(+) = 15-oxoprostaglandin E2 + NADPH + H(+). The enzyme catalyses prostaglandin F2alpha + NADP(+) = 15-oxoprostaglandin F2alpha + NADPH + H(+). The catalysed reaction is daunorubicin + NADPH + H(+) = 13-dihydrodaunorubicin + NADP(+). It catalyses the reaction S-nitrosoglutathione + NADPH + H(+) = S-(hydroxysulfenamide)glutathione + NADP(+). It carries out the reaction a primary alcohol + NADP(+) = an aldehyde + NADPH + H(+). The enzyme catalyses cortisol + NADPH + H(+) = 20beta-dihydrocortisol + NADP(+). The catalysed reaction is corticosterone + NADPH + H(+) = 20beta-dihydrocorticosterone + NADP(+). Functionally, NADPH-dependent reductase with broad substrate specificity. Catalyzes the reduction of a wide variety of carbonyl compounds including quinones, prostaglandins, menadione, plus various xenobiotics. Catalyzes the reduction of the antitumor anthracyclines doxorubicin and daunorubicin to the cardiotoxic compounds doxorubicinol and daunorubicinol. Can convert prostaglandin E to prostaglandin F2-alpha. Can bind glutathione, which explains its higher affinity for glutathione-conjugated substrates. Catalyzes the reduction of S-nitrosoglutathione. In addition, participates in the glucocorticoid metabolism by catalyzing the NADPH-dependent cortisol/corticosterone into 20beta-dihydrocortisol (20b-DHF) or 20beta-corticosterone (20b-DHB), which are weak agonists of NR3C1 and NR3C2 in adipose tissue. The chain is Carbonyl reductase [NADPH] 1 from Macaca fascicularis (Crab-eating macaque).